Consider the following 212-residue polypeptide: Protein-L-isoaspartate O-methyltransferase (212 aa).

The active site involves serine 60.

It belongs to the methyltransferase superfamily. L-isoaspartyl/D-aspartyl protein methyltransferase family.

The protein resides in the cytoplasm. It catalyses the reaction [protein]-L-isoaspartate + S-adenosyl-L-methionine = [protein]-L-isoaspartate alpha-methyl ester + S-adenosyl-L-homocysteine. Its function is as follows. Catalyzes the methyl esterification of L-isoaspartyl residues in peptides and proteins that result from spontaneous decomposition of normal L-aspartyl and L-asparaginyl residues. It plays a role in the repair and/or degradation of damaged proteins. The chain is Protein-L-isoaspartate O-methyltransferase from Methanococcus maripaludis (strain C6 / ATCC BAA-1332).